We begin with the raw amino-acid sequence, 99 residues long: Small ribosomal subunit protein bS6 (99 aa).

The protein belongs to the bacterial ribosomal protein bS6 family.

Functionally, binds together with bS18 to 16S ribosomal RNA. The protein is Small ribosomal subunit protein bS6 of Lactiplantibacillus plantarum (strain ATCC BAA-793 / NCIMB 8826 / WCFS1) (Lactobacillus plantarum).